Consider the following 286-residue polypeptide: MNTVKTVRELRAAVARARSEGKRIGFVPTMGNLHSGHAALVAKAAQRVDFVVASIFVNPLQFGAGEDLDKYPRTLAADQEKLLEAGCHLLFAPTVEEMYPDGMAGQTRVSVPQLSEGLCGASRPGHFEGVATVVSKLFNMVQPDLAVFGQKDYQQLAVIRALVHDLNMPIQIIGEPTVRAADGLALSSRNGYLSEEQRAIAPVLYRSLSQIAQAIRNGERDYPKLVAEQQQQLEAAGLRRDYLEIRQAQNLRPATAQDRELVILVAAYLGATRLIDNLHLDLDTPA.

An ATP-binding site is contributed by 30 to 37 (MGNLHSGH). Residue His37 is the Proton donor of the active site. Gln61 is a binding site for (R)-pantoate. A beta-alanine-binding site is contributed by Gln61. 149–152 (GQKD) contributes to the ATP binding site. Gln155 is a (R)-pantoate binding site. Residues Val178 and 186-189 (LSSR) contribute to the ATP site.

The protein belongs to the pantothenate synthetase family. As to quaternary structure, homodimer.

It localises to the cytoplasm. It catalyses the reaction (R)-pantoate + beta-alanine + ATP = (R)-pantothenate + AMP + diphosphate + H(+). It participates in cofactor biosynthesis; (R)-pantothenate biosynthesis; (R)-pantothenate from (R)-pantoate and beta-alanine: step 1/1. Catalyzes the condensation of pantoate with beta-alanine in an ATP-dependent reaction via a pantoyl-adenylate intermediate. In Pseudomonas fluorescens (strain ATCC BAA-477 / NRRL B-23932 / Pf-5), this protein is Pantothenate synthetase.